The primary structure comprises 620 residues: MSFDIAKYPTLALVDSTQELRLLPKESLPKLCDELRRYLLDSVSRSSGHFASGLGTVELTVALHYVYNTPFDQLIWDVGHQAYPHKILTGRRDKIGTIRQKGGLHPFPWRGESEYDVLSVGHSSTSISAGIGIAVAAEKEGKNRRTVCVIGDGAITAGMAFEAMNHAGDIRPDMLVVLNDNEMSISENVGALNNHLAQLLSGKLYSSLREGGKKVFSGVPPIKELLKRTEEHIKGMVVPGTLFEELGFNYIGPVDGHDVLGLITTLKNMRDLKGPQFLHIMTKKGRGYEPAEKDPITFHAVPKFDPSSGCLPKSSGGLPSYSKIFGDWLCETAAKDNKLMAITPAMREGSGMVEFSRKFPDRYFDVAIAEQHAVTFAAGLAIGGYKPIVAIYSTFLQRAYDQVLHDVAIQKLPVLFAIDRAGIVGADGQTHQGAFDLSYLRCIPEMVIMTPSDENECRQMLYTGYHYNDGPSAVRYPRGNAVGVELTPLEKLPIGKGIVKRRGEKLAILNFGTLMPDAAKVAESLNATLVDMRFVKPLDEALILEMAASHEALVTVEENAIMGGAGSGVNEVLMAHRKPVPVLNIGLPDFFIPQGTQEEMRAELGLDAAGMEAKIKAWLA.

Thiamine diphosphate contacts are provided by residues His-80 and Gly-121–Ser-123. Asp-152 provides a ligand contact to Mg(2+). Thiamine diphosphate-binding positions include Gly-153 to Ala-154, Asn-181, Tyr-288, and Glu-370. Asn-181 lines the Mg(2+) pocket.

It belongs to the transketolase family. DXPS subfamily. As to quaternary structure, homodimer. Requires Mg(2+) as cofactor. Thiamine diphosphate serves as cofactor.

It carries out the reaction D-glyceraldehyde 3-phosphate + pyruvate + H(+) = 1-deoxy-D-xylulose 5-phosphate + CO2. It participates in metabolic intermediate biosynthesis; 1-deoxy-D-xylulose 5-phosphate biosynthesis; 1-deoxy-D-xylulose 5-phosphate from D-glyceraldehyde 3-phosphate and pyruvate: step 1/1. Catalyzes the acyloin condensation reaction between C atoms 2 and 3 of pyruvate and glyceraldehyde 3-phosphate to yield 1-deoxy-D-xylulose-5-phosphate (DXP). The polypeptide is 1-deoxy-D-xylulose-5-phosphate synthase (Escherichia coli O139:H28 (strain E24377A / ETEC)).